We begin with the raw amino-acid sequence, 214 residues long: Putative ankyrin repeat protein R844 (214 aa).

ANK repeat units lie at residues 41-70 (VEKNMIEHIVENGYLDVLKYIDSLKNQNKF), 81-110 (SLDKYLIMSCEFGHLEMTKYFVSQGANVKT), 111-140 (DNNMPLRLASQNGHIDTIKYLIENSVDVRA), 142-170 (NDCALRMASLFGHINVVKYLVDMGADVTS), and 172-200 (NNFAIIHTARSGRLELAKYLAEKGADIRA).

In Acanthamoeba polyphaga mimivirus (APMV), this protein is Putative ankyrin repeat protein R844.